Here is a 413-residue protein sequence, read N- to C-terminus: Protein arginine N-methyltransferase 2 (413 aa).

Residues 148 to 187 (LDGSDTEMGDKGGSARDVPASADSAPADSAGHSSSEPTAV) form a disordered region. Residues 162–182 (ARDVPASADSAPADSAGHSSS) are compositionally biased toward low complexity. One can recognise an RMT2 domain in the interval 192-413 (TAAHQDTYLQ…HYYHPEISFQ (222 aa)). S-adenosyl-L-methionine is bound by residues tyrosine 199, methionine 229, 252–257 (FGMGII), 273–275 (EAH), 300–301 (WQ), and aspartate 321.

The protein belongs to the class I-like SAM-binding methyltransferase superfamily. RMT2 methyltransferase family. As to quaternary structure, monomer.

It localises to the cytoplasm. It is found in the nucleus. Functionally, S-adenosyl-L-methionine-dependent protein-arginine N-methyltransferase that methylates the delta-nitrogen atom of arginine residues to form N5-methylarginine (type IV) in target proteins. Monomethylates ribosomal protein L12. This is Protein arginine N-methyltransferase 2 from Eremothecium gossypii (strain ATCC 10895 / CBS 109.51 / FGSC 9923 / NRRL Y-1056) (Yeast).